Consider the following 278-residue polypeptide: Large ribosomal subunit protein uL2 (278 aa).

A disordered region spans residues 201–278; that stretch reads HGNINDGKAG…IMRSRHQRKK (78 aa). A compositionally biased stretch (basic residues) spans 210–221; it reads GRSRWRGKRPHV.

This sequence belongs to the universal ribosomal protein uL2 family. As to quaternary structure, part of the 50S ribosomal subunit. Forms a bridge to the 30S subunit in the 70S ribosome.

One of the primary rRNA binding proteins. Required for association of the 30S and 50S subunits to form the 70S ribosome, for tRNA binding and peptide bond formation. It has been suggested to have peptidyltransferase activity; this is somewhat controversial. Makes several contacts with the 16S rRNA in the 70S ribosome. In Rhizobium meliloti (strain 1021) (Ensifer meliloti), this protein is Large ribosomal subunit protein uL2.